The primary structure comprises 1113 residues: Centrosomal protein of 131 kDa (1113 aa).

Disordered stretches follow at residues 78-97 and 232-267; these read RRSN…LSSE and KSQK…TEEE. Positions 79-97 are enriched in polar residues; it reads RSNSTTQVNQQANTSLSSE. The span at 238-257 shows a compositional bias: low complexity; that stretch reads SSASSSSNNNAPRSPRSPGQ. Residues 259–371 are a coiled coil; the sequence is RRREVTEEEA…QQIAEQETEA (113 aa). Positions 276-296 constitute an IQ domain; it reads NHAAIIIQRWYRRHVNSKRAN. Disordered regions lie at residues 306–331, 368–401, and 438–458; these read SKKK…EDDR, ETEA…NTDS, and SVSM…SKTT. Residues 307–331 are compositionally biased toward basic and acidic residues; the sequence is KKKEREQRAEEAKTTESLKKKEDDR. Over residues 374-384 the composition is skewed to basic residues; the sequence is HPGKVGRKKLT. The segment covering 446-458 has biased composition (low complexity); that stretch reads QGASSSRAQSKTT. A coiled-coil region spans residues 580–1111; sequence SMMRLRLELD…LLEQQRKQLL (532 aa).

Belongs to the CEP131 family.

It localises to the chromosome. The protein resides in the centromere. The protein localises to the cytoplasm. Its subcellular location is the cytoskeleton. It is found in the microtubule organizing center. It localises to the centrosome. The protein resides in the centriolar satellite. The protein localises to the cilium basal body. Its subcellular location is the cytoplasmic vesicle. It is found in the secretory vesicle. It localises to the acrosome. Functionally, cilium-specific protein required for the regulation of cilium/flagellum formation. Involved in centriole duplication. May play a role in melanosome trafficking. The chain is Centrosomal protein of 131 kDa (cep131) from Danio rerio (Zebrafish).